Reading from the N-terminus, the 78-residue chain is Delta-conotoxin-like TxMKLT1-0111 (78 aa).

The N-terminal stretch at 1–22 (MKLTCMMIVAVLFLTAWTFATA) is a signal peptide. A propeptide spanning residues 23 to 49 (DDSGNGLENLFSNAHHQMKNPEASKLN) is cleaved from the precursor. Intrachain disulfides connect C53/C68, C60/C72, and C67/C77.

This sequence belongs to the conotoxin O1 superfamily. As to expression, expressed by the venom duct.

It localises to the secreted. In terms of biological role, delta-conotoxins bind to site 6 of voltage-gated sodium channels (Nav) and inhibit the inactivation process. In Conus textile (Cloth-of-gold cone), this protein is Delta-conotoxin-like TxMKLT1-0111.